Here is a 62-residue protein sequence, read N- to C-terminus: Potassium channel toxin alpha-KTx Tx790 (62 aa).

The first 18 residues, 1-18 (MQKLFIVLVLFCILRLDA), serve as a signal peptide directing secretion. 3 disulfide bridges follow: cysteine 28–cysteine 46, cysteine 33–cysteine 59, and cysteine 37–cysteine 61.

The protein belongs to the short scorpion toxin superfamily. Potassium channel inhibitor family. Alpha-KTx 23 subfamily. As to expression, expressed by the venom gland.

The protein resides in the secreted. Its function is as follows. May block potassium channels. The sequence is that of Potassium channel toxin alpha-KTx Tx790 from Buthus israelis (Israeli scorpion).